A 330-amino-acid polypeptide reads, in one-letter code: Probable L-lactate dehydrogenase (330 aa).

Residues arginine 105, asparagine 137, and arginine 168 each contribute to the substrate site. Residue asparagine 137 participates in NAD(+) binding. The Proton acceptor role is filled by histidine 192.

The protein belongs to the LDH/MDH superfamily. LDH family. As to quaternary structure, homotetramer.

It localises to the cytoplasm. It catalyses the reaction (S)-lactate + NAD(+) = pyruvate + NADH + H(+). Its pathway is fermentation; pyruvate fermentation to lactate; (S)-lactate from pyruvate: step 1/1. This is Probable L-lactate dehydrogenase from Schizosaccharomyces pombe (strain 972 / ATCC 24843) (Fission yeast).